Reading from the N-terminus, the 428-residue chain is Elongation factor 1-alpha (428 aa).

In terms of domain architecture, tr-type G spans 5–225 (KPILNVAFIG…DAFQPPEKPT (221 aa)). Residues 14-21 (GHVDAGKS) form a G1 region. Residue 14–21 (GHVDAGKS) coordinates GTP. Ser21 provides a ligand contact to Mg(2+). The G2 stretch occupies residues 70–74 (GVTID). The interval 91–94 (DCPG) is G3. GTP contacts are provided by residues 91-95 (DCPGH) and 149-152 (NKMD). The G4 stretch occupies residues 149–152 (NKMD). A G5 region spans residues 189–191 (ASL).

This sequence belongs to the TRAFAC class translation factor GTPase superfamily. Classic translation factor GTPase family. EF-Tu/EF-1A subfamily.

Its subcellular location is the cytoplasm. It carries out the reaction GTP + H2O = GDP + phosphate + H(+). GTP hydrolase that promotes the GTP-dependent binding of aminoacyl-tRNA to the A-site of ribosomes during protein biosynthesis. The protein is Elongation factor 1-alpha of Methanococcus maripaludis (strain C7 / ATCC BAA-1331).